We begin with the raw amino-acid sequence, 477 residues long: V-type ATP synthase beta chain (477 aa).

The protein belongs to the ATPase alpha/beta chains family.

Functionally, produces ATP from ADP in the presence of a proton gradient across the membrane. The V-type beta chain is a regulatory subunit. In Anaeromyxobacter sp. (strain K), this protein is V-type ATP synthase beta chain.